The primary structure comprises 327 residues: Malate dehydrogenase (327 aa).

Position 12–18 (12–18) interacts with NAD(+); that stretch reads GAAGQIC. Residues arginine 92 and arginine 98 each coordinate substrate. NAD(+) is bound by residues asparagine 105, glutamine 112, and 129–131; that span reads TGN. The substrate site is built by asparagine 131 and arginine 162. The active-site Proton acceptor is histidine 187.

It belongs to the LDH/MDH superfamily. MDH type 2 family.

The catalysed reaction is (S)-malate + NAD(+) = oxaloacetate + NADH + H(+). In terms of biological role, catalyzes the reversible oxidation of malate to oxaloacetate. In Cutibacterium acnes (strain DSM 16379 / KPA171202) (Propionibacterium acnes), this protein is Malate dehydrogenase.